Consider the following 73-residue polypeptide: Putative membrane protein insertion efficiency factor (73 aa).

Belongs to the UPF0161 family.

It localises to the cell inner membrane. Its function is as follows. Could be involved in insertion of integral membrane proteins into the membrane. The sequence is that of Putative membrane protein insertion efficiency factor from Rickettsia bellii (strain OSU 85-389).